The following is a 306-amino-acid chain: Recombination-associated protein RdgC (306 aa).

It belongs to the RdgC family.

The protein resides in the cytoplasm. Its subcellular location is the nucleoid. May be involved in recombination. The polypeptide is Recombination-associated protein RdgC (Pseudomonas fluorescens (strain Pf0-1)).